The following is a 144-amino-acid chain: Large ribosomal subunit protein uL16 (144 aa).

Belongs to the universal ribosomal protein uL16 family. In terms of assembly, part of the 50S ribosomal subunit.

Binds 23S rRNA and is also seen to make contacts with the A and possibly P site tRNAs. This is Large ribosomal subunit protein uL16 from Bacillus mycoides (strain KBAB4) (Bacillus weihenstephanensis).